Reading from the N-terminus, the 225-residue chain is Superantigen-like protein 11 (225 aa).

A signal peptide spans 1–30 (MKLKNIAKASLALGILTTGMITTTAQPVKA). The sialyl Lewis X-binding stretch occupies residues 94–196 (VDIFVVRENS…RITMKDGGFY (103 aa)).

Belongs to the staphylococcal/streptococcal toxin family. In terms of assembly, homodimer (via its C-terminal domain). Interacts with host FCAR and SELPLG (via sialyl Lewis X).

The protein localises to the secreted. Functionally, secreted protein that plays a role in the inhibition of host immune system. Targets myeloid cells such as monocytes or granulocytes through binding with sialyllactosamine-containing glycoproteins. Prevents initial rolling of neutrophils toward the site of infection by interacting with host SELPLG. Disrupts neutrophil motility by induction of cell adhesion via interacting with glycans but independently of SELPLG. The sequence is that of Superantigen-like protein 11 from Staphylococcus aureus (strain Newman).